We begin with the raw amino-acid sequence, 152 residues long: SsrA-binding protein (152 aa).

Positions 129–140 (KREDMKKKDSQR) are enriched in basic and acidic residues. The interval 129 to 152 (KREDMKKKDSQRELSQALKSKNRE) is disordered. Residues 141–152 (ELSQALKSKNRE) are compositionally biased toward polar residues.

The protein belongs to the SmpB family.

It localises to the cytoplasm. Functionally, required for rescue of stalled ribosomes mediated by trans-translation. Binds to transfer-messenger RNA (tmRNA), required for stable association of tmRNA with ribosomes. tmRNA and SmpB together mimic tRNA shape, replacing the anticodon stem-loop with SmpB. tmRNA is encoded by the ssrA gene; the 2 termini fold to resemble tRNA(Ala) and it encodes a 'tag peptide', a short internal open reading frame. During trans-translation Ala-aminoacylated tmRNA acts like a tRNA, entering the A-site of stalled ribosomes, displacing the stalled mRNA. The ribosome then switches to translate the ORF on the tmRNA; the nascent peptide is terminated with the 'tag peptide' encoded by the tmRNA and targeted for degradation. The ribosome is freed to recommence translation, which seems to be the essential function of trans-translation. The protein is SsrA-binding protein of Pelobacter propionicus (strain DSM 2379 / NBRC 103807 / OttBd1).